A 104-amino-acid polypeptide reads, in one-letter code: Iron-sulfur cluster assembly protein CyaY (104 aa).

The protein belongs to the frataxin family.

Functionally, involved in iron-sulfur (Fe-S) cluster assembly. May act as a regulator of Fe-S biogenesis. The chain is Iron-sulfur cluster assembly protein CyaY from Vibrio vulnificus (strain CMCP6).